The following is a 344-amino-acid chain: MFNYYLQKVVKGENLSLDEMEQAMEMIMEGKVTHSQLSGFLVALHMKGETVEEITASAKVMKEKATPISIESGELMDTCGTGGDAKGTFNISTAVAFILAAAGVVVAKHGNRSVSSKSGSADVLESLGINISLPPSSVERCLKEINIAFLFAQDFHKATKHAAVPRKELGIRTIFNVLGPLTNPANIKYQLMGIYDPKLVYPIAEVLNNLGVKRAMVVHGSEGIDEFSLSGKNKVAFLNEGKIEKLEISPEDLGLEKYSIQEIQGGSAEENKRIILNIFNGEMGPKRDVVVLNTAAGLYVANKVNSLEEGINFAQEIIDSGKAMKKLEEMVEFTNFLSLQAKTS.

Residues Gly80, 83–84 (GD), Thr88, 90–93 (NIST), 108–116 (KHGNRSVSS), and Ser120 each bind 5-phospho-alpha-D-ribose 1-diphosphate. Gly80 is a binding site for anthranilate. Position 92 (Ser92) interacts with Mg(2+). Asn111 is an anthranilate binding site. An anthranilate-binding site is contributed by Arg166. Asp225 and Glu226 together coordinate Mg(2+).

Belongs to the anthranilate phosphoribosyltransferase family. Homodimer. It depends on Mg(2+) as a cofactor.

The catalysed reaction is N-(5-phospho-beta-D-ribosyl)anthranilate + diphosphate = 5-phospho-alpha-D-ribose 1-diphosphate + anthranilate. It participates in amino-acid biosynthesis; L-tryptophan biosynthesis; L-tryptophan from chorismate: step 2/5. In terms of biological role, catalyzes the transfer of the phosphoribosyl group of 5-phosphorylribose-1-pyrophosphate (PRPP) to anthranilate to yield N-(5'-phosphoribosyl)-anthranilate (PRA). This Petrotoga mobilis (strain DSM 10674 / SJ95) protein is Anthranilate phosphoribosyltransferase.